Reading from the N-terminus, the 104-residue chain is Large ribosomal subunit protein uL23 (104 aa).

The protein belongs to the universal ribosomal protein uL23 family. Part of the 50S ribosomal subunit. Contacts protein L29, and trigger factor when it is bound to the ribosome.

In terms of biological role, one of the early assembly proteins it binds 23S rRNA. One of the proteins that surrounds the polypeptide exit tunnel on the outside of the ribosome. Forms the main docking site for trigger factor binding to the ribosome. The sequence is that of Large ribosomal subunit protein uL23 from Leptospira borgpetersenii serovar Hardjo-bovis (strain JB197).